Consider the following 239-residue polypeptide: DNA repair protein RecO (239 aa).

This sequence belongs to the RecO family.

Involved in DNA repair and RecF pathway recombination. This is DNA repair protein RecO from Bifidobacterium animalis subsp. lactis (strain AD011).